The sequence spans 168 residues: Photosystem I assembly protein Ycf3 (168 aa).

TPR repeat units follow at residues 35 to 68 (AFTY…EIDP), 72 to 105 (SYIL…NPFL), and 120 to 153 (GEQA…TPGN).

It belongs to the Ycf3 family.

The protein resides in the plastid. The protein localises to the chloroplast thylakoid membrane. In terms of biological role, essential for the assembly of the photosystem I (PSI) complex. May act as a chaperone-like factor to guide the assembly of the PSI subunits. The protein is Photosystem I assembly protein Ycf3 of Populus alba (White poplar).